Consider the following 90-residue polypeptide: Probable Fe(2+)-trafficking protein (90 aa).

Belongs to the Fe(2+)-trafficking protein family.

In terms of biological role, could be a mediator in iron transactions between iron acquisition and iron-requiring processes, such as synthesis and/or repair of Fe-S clusters in biosynthetic enzymes. The sequence is that of Probable Fe(2+)-trafficking protein from Nitrosomonas europaea (strain ATCC 19718 / CIP 103999 / KCTC 2705 / NBRC 14298).